A 336-amino-acid chain; its full sequence is MPKTETYPRLLADIGGTNARFGLEVAPRQIECIEVLRCEDFESLSDAVRFYLSKCKESLKLHPIYGSFAVATPIMGDFVQMTNNHWTFSIETTRQCLTLKKLLVINDFVAQAYAISAMQENDLAQIGGIKCEINAPKAILGPGTGLGVSTLIQNSDGSLKVLPGEGGHVSFAPFDDLEILVWQYARSKFNHVSAERFLSGSGLVLIYEALSKRKGLEKVAKLSKAELTPQIISERALNGDYPICRLTLDTFCSMLGTLAADVALTLGARGGVYLCGGIIPRFIDYFKTSPFRARFETKGRMGAFLASIPVHVVMKKTPGLDGAGIALENYLLHDKI.

12–17 contacts ATP; sequence ADIGGT.

The protein belongs to the bacterial glucokinase family.

It is found in the cytoplasm. It catalyses the reaction D-glucose + ATP = D-glucose 6-phosphate + ADP + H(+). The polypeptide is Glucokinase (Helicobacter pylori (strain P12)).